Here is a 170-residue protein sequence, read N- to C-terminus: Urease accessory protein UreE (170 aa).

Positions 137-170 are disordered; the sequence is PFDPESGAYAHAGREQSHAHSHEHSHADGHTHAH. Over residues 148–170 the composition is skewed to basic and acidic residues; the sequence is AGREQSHAHSHEHSHADGHTHAH.

Belongs to the UreE family.

The protein localises to the cytoplasm. Its function is as follows. Involved in urease metallocenter assembly. Binds nickel. Probably functions as a nickel donor during metallocenter assembly. The protein is Urease accessory protein UreE of Pseudoalteromonas translucida (strain TAC 125).